Consider the following 231-residue polypeptide: ATP-dependent dethiobiotin synthetase BioD (231 aa).

12-17 (EVGKTV) lines the ATP pocket. Thr-16 is a Mg(2+) binding site. Lys-37 is a catalytic residue. Ser-41 provides a ligand contact to substrate. Residues Asp-51, 112–115 (EGAG), and 202–204 (PKL) contribute to the ATP site. Asp-51 and Glu-112 together coordinate Mg(2+).

The protein belongs to the dethiobiotin synthetase family. As to quaternary structure, homodimer. Requires Mg(2+) as cofactor.

It is found in the cytoplasm. It catalyses the reaction (7R,8S)-7,8-diammoniononanoate + CO2 + ATP = (4R,5S)-dethiobiotin + ADP + phosphate + 3 H(+). Its pathway is cofactor biosynthesis; biotin biosynthesis; biotin from 7,8-diaminononanoate: step 1/2. Its function is as follows. Catalyzes a mechanistically unusual reaction, the ATP-dependent insertion of CO2 between the N7 and N8 nitrogen atoms of 7,8-diaminopelargonic acid (DAPA, also called 7,8-diammoniononanoate) to form a ureido ring. This is ATP-dependent dethiobiotin synthetase BioD from Bacillus subtilis (strain 168).